Here is a 115-residue protein sequence, read N- to C-terminus: U2-ctenitoxin-Pn1b (115 aa).

The N-terminal stretch at 1-17 (MKVAVIILSILVLAAAS) is a signal peptide. A propeptide spanning residues 18–61 (ESIEEYREDFSRPNAMERSANDWIPTAPSAVERSADFAVEELER) is cleaved from the precursor. 5 cysteine pairs are disulfide-bonded: cysteine 64/cysteine 78, cysteine 71/cysteine 84, cysteine 75/cysteine 113, cysteine 77/cysteine 98, and cysteine 86/cysteine 96. A propeptide is located at residue lysine 115.

It belongs to the neurotoxin 03 (Tx2) family. 04 subfamily. Expressed by the venom gland.

It is found in the secreted. Blocks voltage-gated sodium channels (Nav). This Phoneutria nigriventer (Brazilian armed spider) protein is U2-ctenitoxin-Pn1b.